The primary structure comprises 139 residues: MCFATRRWFYLHLGCMMLINLVNADFEFQKGVLASISPGITKDIDLQCWKACSLTLIDLKELKIEHNVDAFWNFMLFLQKSQRPGHYNVFLNIAQDFWDMYVDCLLSRSHGMGRRQVMPPKYNFPQKITGGNLNVYLRE.

The N-terminal stretch at 1-24 is a signal peptide; the sequence is MCFATRRWFYLHLGCMMLINLVNA. Residue Met112 is modified to Methionine amide. Positions 113 to 139 are cleaved as a propeptide — removed in the mature form; it reads GRRQVMPPKYNFPQKITGGNLNVYLRE.

The active form requires C-terminal amidation and disulfide bond formation.

The protein resides in the secreted. In terms of biological role, may be capable of activating GPR83 via the GNAQ signaling pathway. The protein is Protein FAM237B of Homo sapiens (Human).